Consider the following 288-residue polypeptide: Acetyl-coenzyme A carboxylase carboxyl transferase subunit beta (288 aa).

A CoA carboxyltransferase N-terminal domain is found at 34–288 (LFAKCPACKH…HLVAFHGGGQ (255 aa)). The Zn(2+) site is built by Cys-38, Cys-41, Cys-56, and Cys-59. The C4-type zinc-finger motif lies at 38–59 (CPACKHMIYKKDLGLAKICPTC).

This sequence belongs to the AccD/PCCB family. Acetyl-CoA carboxylase is a heterohexamer composed of biotin carboxyl carrier protein (AccB), biotin carboxylase (AccC) and two subunits each of ACCase subunit alpha (AccA) and ACCase subunit beta (AccD). Zn(2+) is required as a cofactor.

The protein resides in the cytoplasm. It carries out the reaction N(6)-carboxybiotinyl-L-lysyl-[protein] + acetyl-CoA = N(6)-biotinyl-L-lysyl-[protein] + malonyl-CoA. Its pathway is lipid metabolism; malonyl-CoA biosynthesis; malonyl-CoA from acetyl-CoA: step 1/1. Component of the acetyl coenzyme A carboxylase (ACC) complex. Biotin carboxylase (BC) catalyzes the carboxylation of biotin on its carrier protein (BCCP) and then the CO(2) group is transferred by the transcarboxylase to acetyl-CoA to form malonyl-CoA. The chain is Acetyl-coenzyme A carboxylase carboxyl transferase subunit beta from Streptococcus pyogenes serotype M6 (strain ATCC BAA-946 / MGAS10394).